Consider the following 343-residue polypeptide: Tetraacyldisaccharide 4'-kinase (343 aa).

65–72 is a binding site for ATP; the sequence is HAGGTGKT.

This sequence belongs to the LpxK family.

It carries out the reaction a lipid A disaccharide + ATP = a lipid IVA + ADP + H(+). Its pathway is glycolipid biosynthesis; lipid IV(A) biosynthesis; lipid IV(A) from (3R)-3-hydroxytetradecanoyl-[acyl-carrier-protein] and UDP-N-acetyl-alpha-D-glucosamine: step 6/6. Its function is as follows. Transfers the gamma-phosphate of ATP to the 4'-position of a tetraacyldisaccharide 1-phosphate intermediate (termed DS-1-P) to form tetraacyldisaccharide 1,4'-bis-phosphate (lipid IVA). The polypeptide is Tetraacyldisaccharide 4'-kinase (Neisseria gonorrhoeae (strain ATCC 700825 / FA 1090)).